We begin with the raw amino-acid sequence, 464 residues long: Chitotriosidase-1 (464 aa).

Residues 1–21 (MVQSLAWAGVMTLLMVQWGSA) form the signal peptide. The GH18 domain maps to 22 to 386 (AKLVCYLTNW…RTLRQELNLP (365 aa)). A disulfide bridge links Cys-26 with Cys-51. Chitin contacts are provided by residues 70-71 (EH) and 97-100 (GGWT). The Proton donor role is filled by Glu-140. Residue 210–213 (MAYD) participates in chitin binding. A disulfide bridge links Cys-307 with Cys-368. Residues 385 to 416 (LPSETPRSPEQIIPEPRPSSMPEQGPSPGLDN) are disordered. The Chitin-binding type-2 domain occupies 415–464 (DNFCQGKADGVYPNPGDESTYYNCGGGRLFQQSCPPGLVFRASCKCCTWS). Cys-448 and Cys-461 are disulfide-bonded.

This sequence belongs to the glycosyl hydrolase 18 family. Chitinase class II subfamily. Monomer. Highly expressed in tongue, stomach, kidney, brain, skin, testis, and bone marrow. Low level of expression was found in lung, heart, spleen, small intestine, and liver. Not detectable in pancreas, salivary gland, large intestine, uterus, or peripheral blood mononuclear cells (PBMC).

It is found in the secreted. Its subcellular location is the lysosome. The enzyme catalyses Random endo-hydrolysis of N-acetyl-beta-D-glucosaminide (1-&gt;4)-beta-linkages in chitin and chitodextrins.. In terms of biological role, degrades chitin, chitotriose and chitobiose. May participate in the defense against nematodes and other pathogens. The polypeptide is Chitotriosidase-1 (Chit1) (Mus musculus (Mouse)).